The following is a 385-amino-acid chain: Probable protein phosphatase 2C 38 (385 aa).

The PPM-type phosphatase domain maps to 46-357 (VAGEFSMSVI…DDITVIVVFL (312 aa)). A Phosphoserine modification is found at Ser-77. Mn(2+)-binding residues include Asp-88, Gly-89, Asp-289, and Asp-348.

It belongs to the PP2C family. Interacts with BIK1. Mg(2+) serves as cofactor. The cofactor is Mn(2+). In terms of processing, phosphorylation at Ser-77 induces dissociation of PP2C38 from BIK1.

The protein resides in the cell membrane. It carries out the reaction O-phospho-L-seryl-[protein] + H2O = L-seryl-[protein] + phosphate. It catalyses the reaction O-phospho-L-threonyl-[protein] + H2O = L-threonyl-[protein] + phosphate. May dephosphorylate and repress plasma membrane H(+)-ATPases (PM H(+)-ATPases, e.g. AHA1 and AHA2), thus influencing negatively plant growth and fitness. Involved in pathogen-associated molecular pattern (PAMP)-triggered immunity (PTI) signaling. Negatively regulates immune responses by controlling the phosphorylation and activation status of BIK1, a central rate-limiting kinase in PTI signaling. Impairs the phosphorylation of the NADPH oxidase RBOHD by BIK1. The protein is Probable protein phosphatase 2C 38 of Arabidopsis thaliana (Mouse-ear cress).